A 164-amino-acid chain; its full sequence is CASP-like protein 1C2 (164 aa).

At 1-8 (MAVELKKV) the chain is on the cytoplasmic side. Residues 9-29 (FSTILRFLALAATVVAVIVMI) form a helical membrane-spanning segment. Residues 30–53 (RSHDSAIVLNLTFSAKYNNTPAFK) are Extracellular-facing. Asn39 is a glycosylation site (N-linked (GlcNAc...) asparagine). Residues 54 to 74 (YFVIAEGIASVYTIIVIFLWS) traverse the membrane as a helical segment. The Cytoplasmic segment spans residues 75–80 (KGLLGR). A helical transmembrane segment spans residues 81–101 (LIVILDMVTTVLLTSSISAAL). Residues 102–129 (AIAQVGKKGNSHAGWLPVCGQVPKFCDQ) lie on the Extracellular side of the membrane. A helical membrane pass occupies residues 130–150 (AIIALVAGFVAAIVYFMLLLC). Over 151–164 (SLHAVLTPIFAVKP) the chain is Cytoplasmic.

The protein belongs to the Casparian strip membrane proteins (CASP) family. As to quaternary structure, homodimer and heterodimers.

It is found in the cell membrane. This chain is CASP-like protein 1C2, found in Ricinus communis (Castor bean).